Here is a 422-residue protein sequence, read N- to C-terminus: Serine protease HTRA2, mitochondrial (422 aa).

The transit peptide at 1–17 (MALRGSHRLQVILKRCI) directs the protein to the mitochondrion. The propeptide occupies 18-74 (ASPLFHSHAPNRRSSQPAIKGGEPNSNGNSGHDQQNGERKGKGWRRLVSFFVPFSLG). Residues 24-56 (SHAPNRRSSQPAIKGGEPNSNGNSGHDQQNGER) are disordered. The segment covering 41–51 (PNSNGNSGHDQ) has biased composition (polar residues). Residues 64–82 (LVSFFVPFSLGAVVSAAVI) traverse the membrane as a helical segment. 2 consecutive short sequence motifs (IAP-binding) follow at residues 75-78 (AVVS) and 94-97 (SKMT). Residues 139–302 (SNGSGFIIEQ…IPIDYVKVFL (164 aa)) are serine protease. Residues His-157, Asp-189, and Ser-266 each act as charge relay system in the active site. Residues 325 to 410 (MGITMLTLTP…NLDIVILRGV (86 aa)) enclose the PDZ domain.

This sequence belongs to the peptidase S1C family. In terms of assembly, interacts with th/DIAP1 (via BIR 2 domain).

The protein localises to the mitochondrion intermembrane space. It localises to the mitochondrion membrane. It catalyses the reaction Cleavage of non-polar aliphatic amino-acids at the P1 position, with a preference for Val, Ile and Met. At the P2 and P3 positions, Arg is selected most strongly with a secondary preference for other hydrophilic residues.. Its function is as follows. Serine protease that shows proteolytic activity against a non-specific substrate beta-casein. Promotes or induces cell death either by direct binding to and inhibition of BIRC proteins (also called inhibitor of apoptosis proteins, IAPs), leading to an increase in caspase activity, or by a BIRC inhibition-independent, caspase-independent and serine protease activity-dependent mechanism. Can antagonize antiapoptotic activity of th/Diap1 by directly inducing the degradation of th/Diap1. The sequence is that of Serine protease HTRA2, mitochondrial from Drosophila erecta (Fruit fly).